A 79-amino-acid chain; its full sequence is UPF0401 protein YkfF (79 aa).

The protein belongs to the UPF0401 family.

The sequence is that of UPF0401 protein YkfF (ykfF) from Escherichia coli (strain K12).